The chain runs to 375 residues: Neuropeptide Y receptor type 4 (375 aa).

Residues 1–39 are Extracellular-facing; sequence MNTSHLMASLSPAFLQGKNGTNPLDSLYNLSDGCQDSAD. 3 N-linked (GlcNAc...) asparagine glycosylation sites follow: Asn-2, Asn-19, and Asn-29. Residues 40-60 form a helical membrane-spanning segment; sequence LLAFIITTYSVETVLGVLGNL. Over 61–78 the chain is Cytoplasmic; that stretch reads CLIFVTTRQKEKSNVTNL. The chain crosses the membrane as a helical span at residues 79–99; sequence LIANLAFSDFLMCLICQPLTV. Residues 100–116 are Extracellular-facing; it reads TYTIMDYWIFGEVLCKM. Cysteines 114 and 201 form a disulfide. The helical transmembrane segment at 117–137 threads the bilayer; that stretch reads LTFIQCMSVTVSILSLVLVAL. The Cytoplasmic portion of the chain corresponds to 138–155; it reads ERHQLIINPTGWKPSISQ. Residues 156 to 176 form a helical membrane-spanning segment; that stretch reads AYLGIVVIWFISCFLSLPFLA. Topologically, residues 177-211 are extracellular; it reads NSILNDLFHYNHSKVVEFLEDKVVCFVSWSSDHHR. N-linked (GlcNAc...) asparagine glycosylation is present at Asn-187. A helical transmembrane segment spans residues 212-232; sequence LIYTTFLLLFQYCVPLAFILV. Residues 233-262 lie on the Cytoplasmic side of the membrane; it reads CYMRIYQRLQRQRRAFHTHTCSSRVGQMKR. Residues 263 to 283 form a helical membrane-spanning segment; the sequence is INGMLMAMVTAFAVLWLPLHV. Over 284-301 the chain is Extracellular; sequence FNTLEDWYQEAIPACHGN. The helical transmembrane segment at 302-322 threads the bilayer; that stretch reads LIFLMCHLFAMASTCVNPFIY. The Cytoplasmic portion of the chain corresponds to 323–375; sequence GFLNINFKKDIKALVLTCRCRPPQGEPEPLPLSTVHTDLSKGSMRMGSKSNVM. A lipid anchor (S-palmitoyl cysteine) is attached at Cys-340.

It belongs to the G-protein coupled receptor 1 family. Detected in colon and brain.

The protein resides in the cell membrane. In terms of biological role, g protein-coupled receptor for PPY/pancreatic polypeptide/PP that is negatively coupled to cAMP. Has much lower affinity for the NPY/neuropeptide Y and PYY/peptide YY. In Rattus norvegicus (Rat), this protein is Neuropeptide Y receptor type 4 (Npy4r).